The primary structure comprises 308 residues: uncharacterized protein (308 aa).

Residues glutamate 19 to lysine 43 are disordered. Positions glutamine 29–lysine 43 are enriched in pro residues.

This is an uncharacterized protein from Deinococcus radiodurans (strain ATCC 13939 / DSM 20539 / JCM 16871 / CCUG 27074 / LMG 4051 / NBRC 15346 / NCIMB 9279 / VKM B-1422 / R1).